Reading from the N-terminus, the 406-residue chain is Proteasome-activating nucleotidase 1 (406 aa).

Residues 13-72 (YDKDSASQQEKITALQERLEVLETQNEEMRDKLLDTNAENNKYQQKLERLTHENKKLKQS) adopt a coiled-coil conformation. ATP-binding positions include 194–199 (GTGKTM) and His-333. A docks into pockets in the proteasome alpha-ring to cause gate opening region spans residues 404-406 (AFA).

The protein belongs to the AAA ATPase family. Homododecamer, in a proposed two stacked hexameric ring configuration, but may also form homohexamer. The hexameric complex has likely a two-ring architecture resembling a top hat that caps the 20S proteasome core at one or both ends. Upon ATP-binding, the C-terminus of PAN probably interacts with the alpha-rings of the proteasome core by binding to the intersubunit pockets. Interacts with SAMP1-MoaE conjugate in vitro, but does not bind to SAMP1 or MoaE alone. Interacts with NcsA.

It is found in the cytoplasm. ATPase activity is inhibited by EDTA in vitro. Its function is as follows. ATPase which is responsible for recognizing, binding, unfolding and translocation of substrate proteins into the archaeal 20S proteasome core particle. Is essential for opening the gate of the 20S proteasome via an interaction with its C-terminus, thereby allowing substrate entry and access to the site of proteolysis. Thus, the C-terminus of the proteasomal ATPase functions like a 'key in a lock' to induce gate opening and therefore regulate proteolysis. Unfolding activity requires energy from ATP hydrolysis, whereas ATP binding alone promotes ATPase-20S proteasome association which triggers gate opening, and supports translocation of unfolded substrates. Is also able to cleave other nucleoside triphosphates including GTP and TTP, but the rate of hydrolysis is 4- to 5-fold slower than for ATP. This is Proteasome-activating nucleotidase 1 from Haloferax volcanii (strain ATCC 29605 / DSM 3757 / JCM 8879 / NBRC 14742 / NCIMB 2012 / VKM B-1768 / DS2) (Halobacterium volcanii).